The primary structure comprises 362 residues: UDP-3-O-acylglucosamine N-acyltransferase 1 (362 aa).

Histidine 258 acts as the Proton acceptor in catalysis.

It belongs to the transferase hexapeptide repeat family. LpxD subfamily. Homotrimer.

The enzyme catalyses a UDP-3-O-[(3R)-3-hydroxyacyl]-alpha-D-glucosamine + a (3R)-hydroxyacyl-[ACP] = a UDP-2-N,3-O-bis[(3R)-3-hydroxyacyl]-alpha-D-glucosamine + holo-[ACP] + H(+). It participates in bacterial outer membrane biogenesis; LPS lipid A biosynthesis. Functionally, catalyzes the N-acylation of UDP-3-O-acylglucosamine using 3-hydroxyacyl-ACP as the acyl donor. Is involved in the biosynthesis of lipid A, a phosphorylated glycolipid that anchors the lipopolysaccharide to the outer membrane of the cell. In Nitrobacter winogradskyi (strain ATCC 25391 / DSM 10237 / CIP 104748 / NCIMB 11846 / Nb-255), this protein is UDP-3-O-acylglucosamine N-acyltransferase 1.